Reading from the N-terminus, the 568-residue chain is Lariat debranching enzyme (568 aa).

4 residues coordinate a divalent metal cation: C8, H10, D39, and N84. Residues 124 to 154 (SGIFKSHDFKKGHFEFPPYNPETLRSVYHIR) are lariat recognition loop. Residues H174, H226, and H228 each coordinate a divalent metal cation. The disordered stretch occupies residues 388–568 (IYGERGGKGA…TAVEDEESDS (181 aa)). The span at 417-428 (PSDTSGLSSSYN) shows a compositional bias: polar residues. Residues 432–444 (ITIEDEWEEEEDG) show a composition bias toward acidic residues. Over residues 467-480 (DSDRDSSPQRETAK) the composition is skewed to basic and acidic residues. T478 is modified (phosphothreonine). Low complexity predominate over residues 534–549 (GETTQSSAGQTGGTPQ). S568 carries the phosphoserine modification.

Belongs to the lariat debranching enzyme family. Fe(2+) is required as a cofactor. Requires Zn(2+) as cofactor. Mn(2+) serves as cofactor.

It is found in the nucleus. Active in presence of diverse metals including Fe(2+), Zn(2+), Mn(2+). Also activated by Ca(2+). Binds two metal cations in two adjacent alpha and beta metal-binding pockets. Its function is as follows. Cleaves the 2'-5' phosphodiester linkage at the branch point of excised lariat intron RNA and converts them into linear molecules that can be subsequently degraded, thereby facilitating ribonucleotide turnover. Linked to its role in pre-mRNA processing mechanism, may also participate in retrovirus replication and have an antiviral cell-intrinsic defense function. In Danio rerio (Zebrafish), this protein is Lariat debranching enzyme (dbr1).